An 89-amino-acid polypeptide reads, in one-letter code: MAHKKAGGSSRNGRDSAGRRLGVKLYGGQSAIAGNIIVRQRGTKFWPGEGVGIGKDHTIFATANGNVTFHKGLKGRTFISVLPAAEAAE.

It belongs to the bacterial ribosomal protein bL27 family.

In Ruegeria sp. (strain TM1040) (Silicibacter sp.), this protein is Large ribosomal subunit protein bL27.